A 563-amino-acid chain; its full sequence is Septation ring formation regulator EzrA (563 aa).

Over 1–2 (ME) the chain is Extracellular. A helical transmembrane segment spans residues 3 to 21 (LVIGLLVILLALFAAGYFF). Topologically, residues 22–563 (RKKIYTEIDR…KKIKADQSAS (542 aa)) are cytoplasmic. Coiled-coil stretches lie at residues 133-159 (EEKS…AYSH), 243-276 (KGYK…ELDV), and 309-529 (SKMP…ERLF).

It belongs to the EzrA family.

It is found in the cell membrane. Functionally, negative regulator of FtsZ ring formation; modulates the frequency and position of FtsZ ring formation. Inhibits FtsZ ring formation at polar sites. Interacts either with FtsZ or with one of its binding partners to promote depolymerization. In Bacillus velezensis (strain DSM 23117 / BGSC 10A6 / LMG 26770 / FZB42) (Bacillus amyloliquefaciens subsp. plantarum), this protein is Septation ring formation regulator EzrA.